Reading from the N-terminus, the 254-residue chain is NADPH-dependent ferric-chelate reductase (254 aa).

Positions 15–136 constitute an FAD-binding FR-type domain; that stretch reads LRFRELTVLR…AGPRGSLVVP (122 aa).

Belongs to the SIP oxidoreductase family.

It localises to the cytoplasm. It carries out the reaction 2 a Fe(II)-siderophore + NADP(+) + H(+) = 2 a Fe(III)-siderophore + NADPH. Its function is as follows. Plays a role in iron homeostasis under excess nickel conditions. This chain is NADPH-dependent ferric-chelate reductase (yqjH), found in Escherichia coli (strain K12).